The chain runs to 525 residues: DNA damage-binding protein cmr1 (525 aa).

Positions 34–50 (TGVFTSNMPRGTSANQS) are enriched in polar residues. Disordered regions lie at residues 34-103 (TGVF…ERAK), 214-240 (DASQ…DPDP), and 282-301 (TSSV…PISG). The span at 83 to 102 (EIAKRKADEEYDRRQEEERA) shows a compositional bias: basic and acidic residues. Residues 182-223 (ITPERIYSMTFHPSEAKPVIFAGDKMGHLGILDASQEKPTSA) form a WD 1 repeat. Residues 227 to 239 (EDDEDDEDDDDPD) show a composition bias toward acidic residues. 5 WD repeats span residues 247–287 (PHTR…SVEK), 339–379 (LSEK…HTDP), 384–425 (EHQS…SSWK), 448–491 (GRWV…LAQL), and 494–525 (DGIT…CLWM).

Belongs to the WD repeat DDB2/WDR76 family.

Functionally, DNA-binding protein that binds to both single- and double-stranded DNA. Binds preferentially to UV-damaged DNA. May be involved in DNA-metabolic processes. This Emericella nidulans (strain FGSC A4 / ATCC 38163 / CBS 112.46 / NRRL 194 / M139) (Aspergillus nidulans) protein is DNA damage-binding protein cmr1.